A 628-amino-acid polypeptide reads, in one-letter code: Probable alpha-L-arabinofuranosidase A (628 aa).

The signal sequence occupies residues 1–25 (MVAFSTISGLGALSLLFSIIESVDG). 9 N-linked (GlcNAc...) asparagine glycosylation sites follow: Asn36, Asn51, Asn74, Asn152, Asn164, Asn260, Asn359, Asn404, and Asn493.

The protein belongs to the glycosyl hydrolase 51 family.

It is found in the secreted. The enzyme catalyses Hydrolysis of terminal non-reducing alpha-L-arabinofuranoside residues in alpha-L-arabinosides.. It participates in glycan metabolism; L-arabinan degradation. Functionally, alpha-L-arabinofuranosidase involved in the degradation of arabinoxylan, a major component of plant hemicellulose. Acts only on small linear 1,5-alpha-linked L-arabinofuranosyl oligosaccharides. The protein is Probable alpha-L-arabinofuranosidase A (abfA) of Aspergillus terreus (strain NIH 2624 / FGSC A1156).